The sequence spans 679 residues: UvrABC system protein C (679 aa).

Residues 65–143 enclose the GIY-YIG domain; it reads NSPGVYRMLN…IKRLRPRFNV (79 aa). Residues 253–288 form the UVR domain; sequence QKVKSHMAEAMNQAAEDLDFERAAIYRDRLAALSHV.

This sequence belongs to the UvrC family. Interacts with UvrB in an incision complex.

It localises to the cytoplasm. Functionally, the UvrABC repair system catalyzes the recognition and processing of DNA lesions. UvrC both incises the 5' and 3' sides of the lesion. The N-terminal half is responsible for the 3' incision and the C-terminal half is responsible for the 5' incision. The protein is UvrABC system protein C of Rhizobium etli (strain ATCC 51251 / DSM 11541 / JCM 21823 / NBRC 15573 / CFN 42).